A 315-amino-acid polypeptide reads, in one-letter code: tRNA dimethylallyltransferase (315 aa).

14 to 21 (GPTASGKT) contributes to the ATP binding site. A substrate-binding site is contributed by 16–21 (TASGKT). 3 interaction with substrate tRNA regions span residues 39–42 (DSAL), 163–167 (QRIQR), and 248–253 (RCVGYR).

The protein belongs to the IPP transferase family. Monomer. Mg(2+) is required as a cofactor.

The catalysed reaction is adenosine(37) in tRNA + dimethylallyl diphosphate = N(6)-dimethylallyladenosine(37) in tRNA + diphosphate. Its function is as follows. Catalyzes the transfer of a dimethylallyl group onto the adenine at position 37 in tRNAs that read codons beginning with uridine, leading to the formation of N6-(dimethylallyl)adenosine (i(6)A). This chain is tRNA dimethylallyltransferase, found in Paraburkholderia phytofirmans (strain DSM 17436 / LMG 22146 / PsJN) (Burkholderia phytofirmans).